The sequence spans 79 residues: Sec-independent protein translocase protein TatA (79 aa).

A helical transmembrane segment spans residues 1–21 (MGGFTSIWHWVIVLLVIVLLF). The disordered stretch occupies residues 48-79 (EEEAKNEPKTLDAQATQTKAHESSEIKSKQES). Over residues 66–79 (KAHESSEIKSKQES) the composition is skewed to basic and acidic residues.

This sequence belongs to the TatA/E family. The Tat system comprises two distinct complexes: a TatABC complex, containing multiple copies of TatA, TatB and TatC subunits, and a separate TatA complex, containing only TatA subunits. Substrates initially bind to the TatABC complex, which probably triggers association of the separate TatA complex to form the active translocon.

The protein resides in the cell inner membrane. Functionally, part of the twin-arginine translocation (Tat) system that transports large folded proteins containing a characteristic twin-arginine motif in their signal peptide across membranes. TatA could form the protein-conducting channel of the Tat system. The chain is Sec-independent protein translocase protein TatA from Helicobacter pylori (strain P12).